A 380-amino-acid chain; its full sequence is Queuine tRNA-ribosyltransferase (380 aa).

D96 (proton acceptor) is an active-site residue. Residues 96 to 100 (DSGGF), D150, Q193, and G220 contribute to the substrate site. Residues 251 to 257 (GVGAPDS) form an RNA binding region. D270 (nucleophile) is an active-site residue. The segment at 275 to 279 (TRIAR) is RNA binding; important for wobble base 34 recognition. Positions 308, 310, 313, and 339 each coordinate Zn(2+).

Belongs to the queuine tRNA-ribosyltransferase family. Homodimer. Within each dimer, one monomer is responsible for RNA recognition and catalysis, while the other monomer binds to the replacement base PreQ1. Zn(2+) serves as cofactor.

The catalysed reaction is 7-aminomethyl-7-carbaguanine + guanosine(34) in tRNA = 7-aminomethyl-7-carbaguanosine(34) in tRNA + guanine. It functions in the pathway tRNA modification; tRNA-queuosine biosynthesis. Catalyzes the base-exchange of a guanine (G) residue with the queuine precursor 7-aminomethyl-7-deazaguanine (PreQ1) at position 34 (anticodon wobble position) in tRNAs with GU(N) anticodons (tRNA-Asp, -Asn, -His and -Tyr). Catalysis occurs through a double-displacement mechanism. The nucleophile active site attacks the C1' of nucleotide 34 to detach the guanine base from the RNA, forming a covalent enzyme-RNA intermediate. The proton acceptor active site deprotonates the incoming PreQ1, allowing a nucleophilic attack on the C1' of the ribose to form the product. After dissociation, two additional enzymatic reactions on the tRNA convert PreQ1 to queuine (Q), resulting in the hypermodified nucleoside queuosine (7-(((4,5-cis-dihydroxy-2-cyclopenten-1-yl)amino)methyl)-7-deazaguanosine). The polypeptide is Queuine tRNA-ribosyltransferase (Streptococcus gordonii (strain Challis / ATCC 35105 / BCRC 15272 / CH1 / DL1 / V288)).